The chain runs to 368 residues: D-amino-acid oxidase (368 aa).

FAD-binding residues include Ala-11, Ser-14, Lys-35, His-36, Cys-46, Ser-47, Gly-51, Asn-53, and Phe-174. A disulfide bridge connects residues Cys-230 and Cys-285. (R)-lactate is bound by residues Tyr-244, Tyr-260, and Arg-308. 3 residues coordinate anthranilate: Tyr-244, Tyr-260, and Arg-308. Residues Arg-308, Gly-334, Gly-337, Tyr-338, and Gln-339 each contribute to the FAD site. The short motif at 366 to 368 (ARL) is the Microbody targeting signal element.

It belongs to the DAMOX/DASOX family. As to quaternary structure, homotetramer. FAD is required as a cofactor. In terms of processing, the disulfide bond might contribute to the high thermal stability of the protein.

The protein localises to the peroxisome matrix. The enzyme catalyses a D-alpha-amino acid + O2 + H2O = a 2-oxocarboxylate + H2O2 + NH4(+). It catalyses the reaction D-alanine + O2 + H2O = pyruvate + H2O2 + NH4(+). It carries out the reaction D-glutamate + O2 + H2O = H2O2 + 2-oxoglutarate + NH4(+). The catalysed reaction is D-serine + O2 + H2O = 3-hydroxypyruvate + H2O2 + NH4(+). The enzyme catalyses D-phenylalanine + O2 + H2O = 3-phenylpyruvate + H2O2 + NH4(+). It catalyses the reaction D-arginine + O2 + H2O = 5-guanidino-2-oxopentanoate + H2O2 + NH4(+). It carries out the reaction D-methionine + O2 + H2O = 4-methylsulfanyl-2-oxobutanoate + H2O2 + NH4(+). The catalysed reaction is D-leucine + O2 + H2O = 4-methyl-2-oxopentanoate + H2O2 + NH4(+). The enzyme catalyses D-lysine + O2 + H2O = 6-amino-2-oxohexanoate + H2O2 + NH4(+). It catalyses the reaction D-valine + O2 + H2O = 3-methyl-2-oxobutanoate + H2O2 + NH4(+). It carries out the reaction D-histidine + O2 + H2O = 3-(imidazol-5-yl)pyruvate + H2O2 + NH4(+). The catalysed reaction is D-glutamine + O2 + H2O = 2-oxoglutaramate + H2O2 + NH4(+). The enzyme catalyses D-isoleucine + O2 + H2O = (R)-3-methyl-2-oxopentanoate + H2O2 + NH4(+). It catalyses the reaction D-allo-isoleucine + O2 + H2O = (S)-3-methyl-2-oxopentanoate + H2O2 + NH4(+). It carries out the reaction D-threonine + O2 + H2O = (S)-3-hydroxy-2-oxobutanoate + H2O2 + NH4(+). The catalysed reaction is D-asparagine + O2 + H2O = 2-oxosuccinamate + H2O2 + NH4(+). The enzyme catalyses D-tryptophan + O2 + H2O = indole-3-pyruvate + H2O2 + NH4(+). It catalyses the reaction D-tyrosine + O2 + H2O = 3-(4-hydroxyphenyl)pyruvate + H2O2 + NH4(+). Its activity is regulated as follows. Partially inhibited by benzoate, crotonate, and D-malate. Its function is as follows. Catalyzes the oxidative deamination of D-amino acids with broad substrate specificity. Enables the organism to utilize D-amino acids as a source of nutrients. Unusually, has high activity on D-glutamate. The chain is D-amino-acid oxidase from Talaromyces emersonii (Thermophilic fungus).